The chain runs to 443 residues: Methylenetetrahydrofolate--tRNA-(uracil-5-)-methyltransferase TrmFO (443 aa).

8–13 (GAGLAG) contacts FAD.

This sequence belongs to the MnmG family. TrmFO subfamily. FAD serves as cofactor.

It localises to the cytoplasm. The catalysed reaction is uridine(54) in tRNA + (6R)-5,10-methylene-5,6,7,8-tetrahydrofolate + NADH + H(+) = 5-methyluridine(54) in tRNA + (6S)-5,6,7,8-tetrahydrofolate + NAD(+). The enzyme catalyses uridine(54) in tRNA + (6R)-5,10-methylene-5,6,7,8-tetrahydrofolate + NADPH + H(+) = 5-methyluridine(54) in tRNA + (6S)-5,6,7,8-tetrahydrofolate + NADP(+). Functionally, catalyzes the folate-dependent formation of 5-methyl-uridine at position 54 (M-5-U54) in all tRNAs. The chain is Methylenetetrahydrofolate--tRNA-(uracil-5-)-methyltransferase TrmFO from Thermus thermophilus (strain ATCC 27634 / DSM 579 / HB8).